A 1220-amino-acid polypeptide reads, in one-letter code: von Willebrand factor A domain-containing protein 5B1 (1220 aa).

The first 18 residues, 1-18, serve as a signal peptide directing secretion; it reads MPGLLNWITGAALPLTAS. Residues 19–149 enclose the VIT domain; the sequence is DVTSCVSGYA…NVTIFISTSS (131 aa). The N-linked (GlcNAc...) asparagine glycan is linked to Asn140. A VWFA domain is found at 361–529; the sequence is EFIFLIDRSS…RLQPKMVKSL (169 aa). N-linked (GlcNAc...) asparagine glycosylation is present at Asn650. A disordered region spans residues 715–807; it reads NSGQDLNQGP…SPSRPATPAP (93 aa). Residues 757–774 are compositionally biased toward basic and acidic residues; the sequence is VRERTSDSRSPGDLEPSH. The span at 796–807 shows a compositional bias: low complexity; it reads RASPSRPATPAP. Tyr881 is subject to Phosphotyrosine. Disordered stretches follow at residues 937 to 962 and 976 to 995; these read RGTS…GKFQ and EARS…QRSL. The N-linked (GlcNAc...) asparagine glycan is linked to Asn1017. Over residues 1093 to 1111 the composition is skewed to polar residues; the sequence is TTRPSESKTPSPQLCTSSP. The disordered stretch occupies residues 1093–1115; the sequence is TTRPSESKTPSPQLCTSSPPRHP.

The protein resides in the secreted. This is von Willebrand factor A domain-containing protein 5B1 (VWA5B1) from Homo sapiens (Human).